Reading from the N-terminus, the 505-residue chain is uncharacterized protein (505 aa).

Positions 193-440 constitute a Radical SAM core domain; that stretch reads CTNKKCNLCE…LEIKKKYIGR (248 aa). 3 residues coordinate [4Fe-4S] cluster: Cys-208, Cys-216, and Cys-219. The 65-residue stretch at 435–499 folds into the TRAM domain; it reads KKYIGRVLEV…EKYLEGRILK (65 aa).

[4Fe-4S] cluster is required as a cofactor.

This is an uncharacterized protein from Methanocaldococcus jannaschii (strain ATCC 43067 / DSM 2661 / JAL-1 / JCM 10045 / NBRC 100440) (Methanococcus jannaschii).